Reading from the N-terminus, the 520-residue chain is GMP synthase [glutamine-hydrolyzing] (520 aa).

The 194-residue stretch at K12–D205 folds into the Glutamine amidotransferase type-1 domain. C89 acts as the Nucleophile in catalysis. Active-site residues include H179 and E181. A GMPS ATP-PPase domain is found at W206–R395. S233–S239 contacts ATP.

As to quaternary structure, homodimer.

It catalyses the reaction XMP + L-glutamine + ATP + H2O = GMP + L-glutamate + AMP + diphosphate + 2 H(+). It functions in the pathway purine metabolism; GMP biosynthesis; GMP from XMP (L-Gln route): step 1/1. Catalyzes the synthesis of GMP from XMP. This chain is GMP synthase [glutamine-hydrolyzing], found in Streptococcus agalactiae serotype III (strain NEM316).